The following is an 83-amino-acid chain: Retinal cone rhodopsin-sensitive cGMP 3',5'-cyclic phosphodiesterase subunit gamma (83 aa).

Residues 1-51 (MSDSPCLSPPAPSQGPTTPRKGPPKFKQRQTRQFKSKPPKKGVKGFGDDIP) form a disordered region. The segment covering 22–43 (GPPKFKQRQTRQFKSKPPKKGV) has biased composition (basic residues).

It belongs to the rod/cone cGMP-PDE gamma subunit family. In terms of assembly, tetramer composed of two catalytic chains (alpha and beta), and two inhibitory chains (gamma).

It carries out the reaction 3',5'-cyclic GMP + H2O = GMP + H(+). In terms of biological role, participates in processes of transmission and amplification of the visual signal. cGMP-PDEs are the effector molecules in G-protein-mediated phototransduction in vertebrate rods and cones. This is Retinal cone rhodopsin-sensitive cGMP 3',5'-cyclic phosphodiesterase subunit gamma (Pde6h) from Rattus norvegicus (Rat).